The chain runs to 605 residues: Microtubule-associated protein VP10 (605 aa).

Interacts with VP1.

It is found in the virion. The protein localises to the host cytoplasm. Its subcellular location is the host cytoskeleton. Its function is as follows. Minor inner capsid component. Displays NTPase and RNA 5'-triphosphatase (RTPase) activities. May function as a cofactor of polymerase VP1. Associates with microtubules and plays a role in the formation, structural organization and morphology of viral inclusions, where the assembly of cores and the replication of viral RNA occur. The sequence is that of Microtubule-associated protein VP10 from Colorado tick fever virus (strain USA/Florio N-7180) (CTFV).